A 166-amino-acid chain; its full sequence is Cytochrome c-type biogenesis protein CcmE (166 aa).

Residues 1–13 lie on the Cytoplasmic side of the membrane; sequence MNFLPKSRKARRR. The chain crosses the membrane as a helical; Signal-anchor for type II membrane protein span at residues 14 to 34; sequence LTILAVAAPVVALAVGLALWG. Topologically, residues 35–166 are periplasmic; that stretch reads MRDAISLFYT…QGYKPGKPNT (132 aa). Residues H128 and Y132 each contribute to the heme site. Residues 143 to 166 form a disordered region; the sequence is EQGEWRGDGQAPSYQGYKPGKPNT.

The protein belongs to the CcmE/CycJ family.

The protein localises to the cell inner membrane. In terms of biological role, heme chaperone required for the biogenesis of c-type cytochromes. Transiently binds heme delivered by CcmC and transfers the heme to apo-cytochromes in a process facilitated by CcmF and CcmH. In Caulobacter sp. (strain K31), this protein is Cytochrome c-type biogenesis protein CcmE.